The sequence spans 444 residues: Killer cell immunoglobulin-like receptor 3DL1 (444 aa).

Residues M1–P21 form the signal peptide. The Extracellular portion of the chain corresponds to H22–H340. 3 Ig-like C2-type domains span residues G42–S102, G137–T202, and G237–S300. 3 cysteine pairs are disulfide-bonded: C49–C95, C144–C195, and C244–C293. Residues N92, N179, and N273 are each glycosylated (N-linked (GlcNAc...) asparagine). Residues V315 to G334 are disordered. Residues P319 to S333 are compositionally biased toward low complexity. Residues I341–L360 traverse the membrane as a helical segment. The Cytoplasmic portion of the chain corresponds to H361–P444. Disordered stretches follow at residues Q375–E394 and R409–P444.

Belongs to the immunoglobulin superfamily.

It is found in the cell membrane. Its function is as follows. Receptor on natural killer (NK) cells for HLA Bw4 allele. Inhibits the activity of NK cells thus preventing cell lysis. In Homo sapiens (Human), this protein is Killer cell immunoglobulin-like receptor 3DL1.